A 651-amino-acid polypeptide reads, in one-letter code: Transcription termination factor FttA (651 aa).

The tract at residues 1 to 200 is archaeal CPSF-KH domain; the sequence is MTFLIKRETQ…ITGLGGFREV (200 aa). The KHa stretch occupies residues 12-79; sequence DQILRDIRAV…ISVRPDPEVL (68 aa). The KHb stretch occupies residues 80-147; that stretch reads LPPEEAEKLI…WAPKVVRTPP (68 aa). A metallo-beta-lactamase N-terminus region spans residues 188-398; it reads WIRITGLGGF…LVMESTYGGA (211 aa). The Zn(2+) site is built by H256, H258, D260, H261, H344, and D367. The segment at 399–592 is beta-Casp; the sequence is NDIQMPREEA…MEVHTIDGFS (194 aa). The interval 593 to 651 is metallo-beta-lactamase C-terminus; it reads GHADRRELMNYVAKVRPRPERIITVHGEPQKCLDLATSIHRKFGISTRAPNNLDTIRLR. Zn(2+) is bound at residue H618.

It belongs to the metallo-beta-lactamase superfamily. RNA-metabolizing metallo-beta-lactamase-like family. FttA subfamily. As to quaternary structure, homodimer. Interacts with RNA polymerase (RNAP), interacts with the Spt4-Spt5 complex. It depends on Zn(2+) as a cofactor.

Functionally, terminates transcription on the whole genome. Termination is linked to FttA-mediated RNA cleavage and does not require NTP hydrolysis. Cleaves endonucleolytically at the RNA exit channel of RNA polymerase (RNAP); the 5'-3' exonuclease activity of this protein degrades the nascent RNA released from RNAP. In terms of biological role, has nuclease activity on single-stranded RNA. The chain is Transcription termination factor FttA from Pyrococcus horikoshii (strain ATCC 700860 / DSM 12428 / JCM 9974 / NBRC 100139 / OT-3).